The sequence spans 254 residues: UPF0246 protein CPF_2407 (254 aa).

Belongs to the UPF0246 family.

This Clostridium perfringens (strain ATCC 13124 / DSM 756 / JCM 1290 / NCIMB 6125 / NCTC 8237 / Type A) protein is UPF0246 protein CPF_2407.